We begin with the raw amino-acid sequence, 149 residues long: Arginine repressor (149 aa).

Belongs to the ArgR family.

It is found in the cytoplasm. It functions in the pathway amino-acid biosynthesis; L-arginine biosynthesis [regulation]. Regulates arginine biosynthesis genes. The polypeptide is Arginine repressor (Exiguobacterium sp. (strain ATCC BAA-1283 / AT1b)).